Consider the following 142-residue polypeptide: Acidic phospholipase A2 Bc-PL (142 aa).

The N-terminal stretch at 1–9 is a signal peptide; the sequence is AVCVSLLGA. The propeptide occupies 10-17; it reads ANIPPQPL. 7 disulfide bridges follow: C28–C94, C44–C141, C46–C62, C61–C122, C68–C115, C78–C108, and C101–C113. Residues Y45, G47, and G49 each coordinate Ca(2+). H65 is a catalytic residue. A Ca(2+)-binding site is contributed by D66. D116 is a catalytic residue.

This sequence belongs to the phospholipase A2 family. Group I subfamily. D49 sub-subfamily. It depends on Ca(2+) as a cofactor. As to expression, expressed by the venom gland.

It localises to the secreted. It catalyses the reaction a 1,2-diacyl-sn-glycero-3-phosphocholine + H2O = a 1-acyl-sn-glycero-3-phosphocholine + a fatty acid + H(+). In terms of biological role, PLA2 catalyzes the calcium-dependent hydrolysis of the 2-acyl groups in 3-sn-phosphoglycerides. In Bungarus candidus (Malayan krait), this protein is Acidic phospholipase A2 Bc-PL.